The following is a 183-amino-acid chain: Ribosome-recycling factor (183 aa).

This sequence belongs to the RRF family.

It is found in the cytoplasm. Responsible for the release of ribosomes from messenger RNA at the termination of protein biosynthesis. May increase the efficiency of translation by recycling ribosomes from one round of translation to another. The polypeptide is Ribosome-recycling factor (Afipia carboxidovorans (strain ATCC 49405 / DSM 1227 / KCTC 32145 / OM5) (Oligotropha carboxidovorans)).